Reading from the N-terminus, the 288-residue chain is Polyprenyl transferase eriF (288 aa).

The next 6 helical transmembrane spans lie at 24-44 (ASIIPGSIFAVGAMRGLTLPL), 51-71 (YIFLVTWLTPYIYFFTLLNQV), 101-121 (IAAFSVFLGVALYEPSLLPET), 145-165 (CIAMATGAWALLSASWKAISP), 215-235 (FIITFLALPAACCILSLGGIF), and 268-288 (FYTYIFCFILMLSSMDSHGLI).

It belongs to the UbiA prenyltransferase family. Requires Mg(2+) as cofactor.

The protein localises to the membrane. Functionally, polyprenyl transferase; part of the gene cluster that mediates the biosynthesis of erinacines, cyathane-xylosides that show unique biological activities, including leishmanicidal activity, stimulating activity for nerve growth-factor synthesis, and agonistic activity toward the kappa opioid receptor. The role of eriF within the pathway has still to be determined. The first step of the erinacines biosynthesis pathway is catalyzed by the geranylgeranyl diphosphate (GGPP) synthase eriE via conversion of farnesyl pyrophosphate and isopentyl pyrophosphate into geranylgeranyl pyrophosphate (GGPP). GGPP is then substrate of the diterpene cyclase eriG for the production of cyatha-3,12-diene. The cytochrome P450 monooxygenase eriI then hydroxylates cyatha-3,12-diene at C-14 of the seven-membered ring to produce erinacol, which is further hydroxylated at C-15 by the cytochrome P450 monooxygenase eriC to yield cyathadiol. The cytochrome P450 monooxygenase eriA then catalyzes C-11 hydroxylation in the presence of the short chain dehydrogenase/reductase (SDR) eriH, which leads to the production of cyathatriol. The acetyltransferase eriL converts cyathatriol into 11-O-acetyl-cyathatriol. The SDR eriH catalyzes further oxidation of 11-O-acetyl-cyathatriol into 1-O-acetylcyathin A3. Finally, the glycosyl transferase eriJ tranfers xylose from UDP-xylose onto C-14 of 11-O-acetyl-cyathatriol to form eracine Q. EriJ is also able to convert 11-O-acetyl-cyathatriol to eracine Q2 by using UDP-D-glucose as cosubstrate, but at a lower rate. This Hericium erinaceus (Lion's mane mushroom) protein is Polyprenyl transferase eriF.